A 297-amino-acid polypeptide reads, in one-letter code: MIKFYNRKTKSYEIEKISGEKLLNWLYNSKNINFLDIVTKKKFFSYIYGQYCDSKLSTLKIKSFVNNFNIDMNESLKSIGEFNSFNDFFTRKLKSNSRTIYGNKNILISPADSKVLAFENIDINKIIQVKGSNYSFKELLNSDKLCEQYKNGSCIIFRLCPTDYHRFHFIDSGICTKTNKINGYYYSVNPIALEKIPSLFCKNKREWSILKSNNFGDILYMEVGATCVGTIVQTYTANKEVSKGQEKGYFKFGGSTVILFFEKNKVSIDKDILMQSNLGYETKVLIGDKIGKKFCSK.

Residues Asp-112, His-168, and Ser-255 each act as charge relay system; for autoendoproteolytic cleavage activity in the active site. The active-site Schiff-base intermediate with substrate; via pyruvic acid; for decarboxylase activity is Ser-255. At Ser-255 the chain carries Pyruvic acid (Ser); by autocatalysis.

It belongs to the phosphatidylserine decarboxylase family. PSD-B subfamily. Prokaryotic type II sub-subfamily. As to quaternary structure, heterodimer of a large membrane-associated beta subunit and a small pyruvoyl-containing alpha subunit. Requires pyruvate as cofactor. In terms of processing, is synthesized initially as an inactive proenzyme. Formation of the active enzyme involves a self-maturation process in which the active site pyruvoyl group is generated from an internal serine residue via an autocatalytic post-translational modification. Two non-identical subunits are generated from the proenzyme in this reaction, and the pyruvate is formed at the N-terminus of the alpha chain, which is derived from the carboxyl end of the proenzyme. The autoendoproteolytic cleavage occurs by a canonical serine protease mechanism, in which the side chain hydroxyl group of the serine supplies its oxygen atom to form the C-terminus of the beta chain, while the remainder of the serine residue undergoes an oxidative deamination to produce ammonia and the pyruvoyl prosthetic group on the alpha chain. During this reaction, the Ser that is part of the protease active site of the proenzyme becomes the pyruvoyl prosthetic group, which constitutes an essential element of the active site of the mature decarboxylase.

The protein localises to the cell membrane. It catalyses the reaction a 1,2-diacyl-sn-glycero-3-phospho-L-serine + H(+) = a 1,2-diacyl-sn-glycero-3-phosphoethanolamine + CO2. The protein operates within phospholipid metabolism; phosphatidylethanolamine biosynthesis; phosphatidylethanolamine from CDP-diacylglycerol: step 2/2. Catalyzes the formation of phosphatidylethanolamine (PtdEtn) from phosphatidylserine (PtdSer). The polypeptide is Phosphatidylserine decarboxylase proenzyme (Clostridium tetani (strain Massachusetts / E88)).